Here is a 217-residue protein sequence, read N- to C-terminus: Thiopurine S-methyltransferase (217 aa).

Positions 11, 46, 67, and 122 each coordinate S-adenosyl-L-methionine.

This sequence belongs to the class I-like SAM-binding methyltransferase superfamily. TPMT family.

It localises to the cytoplasm. It carries out the reaction S-adenosyl-L-methionine + a thiopurine = S-adenosyl-L-homocysteine + a thiopurine S-methylether.. This chain is Thiopurine S-methyltransferase, found in Vibrio vulnificus (strain YJ016).